We begin with the raw amino-acid sequence, 557 residues long: High-affinity hexose transporter ght4 (557 aa).

Over 1 to 9 (MGRTLTSVL) the chain is Cytoplasmic. Residues 10–30 (VVFISMAGWLGGADTGSISGI) form a helical membrane-spanning segment. Over 31–58 (LGMRDFQSRFADRYNPITNSYSYSAWRQ) the chain is Extracellular. A helical transmembrane segment spans residues 59-79 (ALLTGTVNAGCLFGAMLSSPF). Residues 80–87 (TEAIGKKY) lie on the Cytoplasmic side of the membrane. The helical transmembrane segment at 88-108 (SIAFFSGCYIIGQILLVTAVP) threads the bilayer. Over 109-112 (SWVQ) the chain is Extracellular. The helical transmembrane segment at 113–133 (IMVGKLFTGLTIGALSVLSPG) threads the bilayer. At 134–144 (YQSEVAPPQIR) the chain is on the cytoplasmic side. A helical transmembrane segment spans residues 145–165 (GAVVSTYQLFQTCGTLIAACI). The Extracellular segment spans residues 166–179 (NMGTHKLRKTASWR). The chain crosses the membrane as a helical span at residues 180 to 200 (TSFGINILWGIFLMVGVLFLP). At 201-266 (ESPRYLIYKG…VFGKEVRYRT (66 aa)) the chain is on the cytoplasmic side. The chain crosses the membrane as a helical span at residues 267 to 285 (VLGFLTMLLRELIGNNYYF). Topologically, residues 286–301 (YYATQVFKGTGMTDIF) are extracellular. A helical membrane pass occupies residues 302-322 (LPAVILGAINFGTTFGALYTI). Topologically, residues 323 to 328 (DNLGRR) are cytoplasmic. The helical transmembrane segment at 329–349 (NPLIFGAAFQSICFFIYAAVG) threads the bilayer. Over 350-363 (DRKLIYKNGTSDHR) the chain is Extracellular. N-linked (GlcNAc...) asparagine glycosylation is present at N357. A helical membrane pass occupies residues 364–384 (AGAVMIVFSCLFLFSYCCSWG). The Cytoplasmic portion of the chain corresponds to 385-404 (PMGWVIVGETFPIRYRSKCA). The chain crosses the membrane as a helical span at residues 405-425 (AVATSGNWLGNFMVSFFTPFI). Residues 426–432 (SNSIGFK) lie on the Extracellular side of the membrane. A helical transmembrane segment spans residues 433–453 (LGYIYACINMTSAFQIFLMAK). Residues 454 to 557 (ETKGLTLEEV…VSEESHPTWV (104 aa)) lie on the Cytoplasmic side of the membrane. Basic and acidic residues predominate over residues 492–514 (KEEEKREREKSKGYRGQEERFIE). The segment at 492-557 (KEEEKREREK…VSEESHPTWV (66 aa)) is disordered. The span at 524–536 (SSASSESFASAGA) shows a compositional bias: low complexity. Residues 547 to 557 (NVSEESHPTWV) show a composition bias toward basic and acidic residues.

It belongs to the major facilitator superfamily. Sugar transporter (TC 2.A.1.1) family.

It is found in the membrane. The protein is High-affinity hexose transporter ght4 (ght4) of Schizosaccharomyces pombe (strain 972 / ATCC 24843) (Fission yeast).